We begin with the raw amino-acid sequence, 196 residues long: Probable malonic semialdehyde reductase RutE (196 aa).

Belongs to the nitroreductase family. HadB/RutE subfamily. The cofactor is FMN.

The enzyme catalyses 3-hydroxypropanoate + NADP(+) = 3-oxopropanoate + NADPH + H(+). May reduce toxic product malonic semialdehyde to 3-hydroxypropionic acid, which is excreted. In Escherichia coli O7:K1 (strain IAI39 / ExPEC), this protein is Probable malonic semialdehyde reductase RutE.